The chain runs to 447 residues: GTPase Der (447 aa).

EngA-type G domains lie at 3–167 (PVIA…VQER) and 181–354 (VKIA…AAAM). GTP contacts are provided by residues 9–16 (GRPNVGKS), 56–60 (DTGGF), 119–122 (NKAE), 187–194 (GRPNVGKS), 234–238 (DTAGL), and 299–302 (NKWD). A KH-like domain is found at 355-439 (VKLPTPQLTR…PLRIEFRTNK (85 aa)).

It belongs to the TRAFAC class TrmE-Era-EngA-EngB-Septin-like GTPase superfamily. EngA (Der) GTPase family. As to quaternary structure, associates with the 50S ribosomal subunit.

GTPase that plays an essential role in the late steps of ribosome biogenesis. This Cupriavidus pinatubonensis (strain JMP 134 / LMG 1197) (Cupriavidus necator (strain JMP 134)) protein is GTPase Der.